Reading from the N-terminus, the 360-residue chain is Protein phosphatase 1 regulatory subunit 7 (360 aa).

The segment at 1–64 (MAAERGAGQQ…GEEDPEEEHE (64 aa)) is disordered. N-acetylalanine is present on Ala2. Phosphoserine occurs at positions 12, 24, 27, 44, and 47. Over residues 17–34 (EVDRRVESEESGDEEGKK) the composition is skewed to basic and acidic residues. Acidic residues predominate over residues 53–63 (ERGEEDPEEEH). LRR repeat units lie at residues 77–98 (DAED…EVLK), 99–120 (KVKT…EELQ), 121–142 (SLRE…EALT), 143–164 (ELEI…DKVT), 165–186 (QLKK…SNLH), 187–208 (QLQM…DTLT), 209–230 (NLES…DALT), 231–252 (NLTV…QNLV), 253–274 (NLQE…ENNN), 275–296 (KLTM…SHLT), and 297–318 (EPQE…DELK). Position 322 is a phosphoserine (Ser322). The LRRCT domain maps to 331–360 (NPLQKDPQYRRKVMLALPSVRQIDATFVRF).

This sequence belongs to the SDS22 family. As to quaternary structure, interacts with PPP1CA, PPP1CB and PPP1CC/PPP1G.

Its subcellular location is the nucleus. Regulatory subunit of protein phosphatase 1. In Pongo abelii (Sumatran orangutan), this protein is Protein phosphatase 1 regulatory subunit 7 (PPP1R7).